Here is a 277-residue protein sequence, read N- to C-terminus: Small ribosomal subunit protein uS2 (277 aa).

Basic and acidic residues-rich tracts occupy residues 227–256 (QARAERQEAAAKEAAGDADKAPAEAERTEA) and 267–277 (SEAKAEGNTEA). Positions 227–277 (QARAERQEAAAKEAAGDADKAPAEAERTEAPAEEAPAEAQSEAKAEGNTEA) are disordered.

It belongs to the universal ribosomal protein uS2 family.

The chain is Small ribosomal subunit protein uS2 from Corynebacterium jeikeium (strain K411).